A 269-amino-acid chain; its full sequence is Thiazole synthase (269 aa).

The active-site Schiff-base intermediate with DXP is lysine 109. 1-deoxy-D-xylulose 5-phosphate contacts are provided by residues glycine 170, 196–197 (AG), and 218–219 (NT).

The protein belongs to the ThiG family. As to quaternary structure, homotetramer. Forms heterodimers with either ThiH or ThiS.

The protein localises to the plastid. It is found in the chloroplast. It catalyses the reaction [ThiS sulfur-carrier protein]-C-terminal-Gly-aminoethanethioate + 2-iminoacetate + 1-deoxy-D-xylulose 5-phosphate = [ThiS sulfur-carrier protein]-C-terminal Gly-Gly + 2-[(2R,5Z)-2-carboxy-4-methylthiazol-5(2H)-ylidene]ethyl phosphate + 2 H2O + H(+). Its pathway is cofactor biosynthesis; thiamine diphosphate biosynthesis. In terms of biological role, catalyzes the rearrangement of 1-deoxy-D-xylulose 5-phosphate (DXP) to produce the thiazole phosphate moiety of thiamine. Sulfur is provided by the thiocarboxylate moiety of the carrier protein ThiS. In vitro, sulfur can be provided by H(2)S. In Phaeodactylum tricornutum (strain CCAP 1055/1), this protein is Thiazole synthase.